The following is a 139-amino-acid chain: Phosphoribosyl-AMP cyclohydrolase (139 aa).

Position 92 (Asp-92) interacts with Mg(2+). Cys-93 is a Zn(2+) binding site. Residues Asp-94 and Asp-96 each contribute to the Mg(2+) site. Residues Cys-111 and Cys-118 each contribute to the Zn(2+) site.

It belongs to the PRA-CH family. Homodimer. Mg(2+) is required as a cofactor. Zn(2+) serves as cofactor.

It localises to the cytoplasm. It carries out the reaction 1-(5-phospho-beta-D-ribosyl)-5'-AMP + H2O = 1-(5-phospho-beta-D-ribosyl)-5-[(5-phospho-beta-D-ribosylamino)methylideneamino]imidazole-4-carboxamide. Its pathway is amino-acid biosynthesis; L-histidine biosynthesis; L-histidine from 5-phospho-alpha-D-ribose 1-diphosphate: step 3/9. Catalyzes the hydrolysis of the adenine ring of phosphoribosyl-AMP. The polypeptide is Phosphoribosyl-AMP cyclohydrolase (Caulobacter vibrioides (strain ATCC 19089 / CIP 103742 / CB 15) (Caulobacter crescentus)).